We begin with the raw amino-acid sequence, 396 residues long: dTDP-epi-vancosaminyltransferase (396 aa).

Position 10-12 (10-12 (SRG)) interacts with dTDP-beta-L-4-epi-vancosamine. Devancoaminyl-vancomycin is bound by residues Asp127, Gln133, Tyr141, and Tyr169. Residues Arg207, Ser230, 277-278 (EV), and 293-298 (HDSAGT) each bind dTDP-beta-L-4-epi-vancosamine.

It belongs to the glycosyltransferase 28 family.

The enzyme catalyses dTDP-beta-L-4-epi-vancosamine + devancoaminyl-vancomycin = chloroorienticin B + dTDP + H(+). It participates in antibiotic biosynthesis; vancomycin biosynthesis. Its function is as follows. Catalyzes the attachment of 4-epi-vancosamine from a TDP donor to the beta-OH-Tyr-6 of the aglycone cosubstrate in the biosynthesis of glycopeptide antibiotic chloroeremomycin, a member of the vancomycin group of antibiotics. Strongly prefers devancoaminyl-vancomycin (DVV) as substrate rather than the heptapeptide vancomycin aglycone (AGV). Acts downstream of GtfB. The polypeptide is dTDP-epi-vancosaminyltransferase (gtfA) (Amycolatopsis orientalis (Nocardia orientalis)).